A 336-amino-acid polypeptide reads, in one-letter code: F420-dependent glucose-6-phosphate dehydrogenase (336 aa).

Asp39 provides a ligand contact to coenzyme F420-(gamma-Glu)n. Residue His40 is the Proton donor of the active site. Residues Thr76 and 107-108 (SG) contribute to the coenzyme F420-(gamma-Glu)n site. Glu109 acts as the Proton acceptor in catalysis. Residues Asn112, 177 to 178 (GG), and 180 to 181 (VV) contribute to the coenzyme F420-(gamma-Glu)n site. Residues Thr195, Lys198, Lys259, and Arg283 each coordinate substrate.

Belongs to the F420-dependent glucose-6-phosphate dehydrogenase family. In terms of assembly, homodimer.

The enzyme catalyses oxidized coenzyme F420-(gamma-L-Glu)(n) + D-glucose 6-phosphate + H(+) = 6-phospho-D-glucono-1,5-lactone + reduced coenzyme F420-(gamma-L-Glu)(n). Its function is as follows. Catalyzes the coenzyme F420-dependent oxidation of glucose 6-phosphate (G6P) to 6-phosphogluconolactone. The polypeptide is F420-dependent glucose-6-phosphate dehydrogenase (Tsukamurella paurometabola (strain ATCC 8368 / DSM 20162 / CCUG 35730 / CIP 100753 / JCM 10117 / KCTC 9821 / NBRC 16120 / NCIMB 702349 / NCTC 13040) (Corynebacterium paurometabolum)).